The sequence spans 146 residues: Hut operon positive regulatory protein (146 aa).

This sequence belongs to the HutP family. In terms of assembly, homohexamer.

Functionally, antiterminator that binds to cis-acting regulatory sequences on the mRNA in the presence of histidine, thereby suppressing transcription termination and activating the hut operon for histidine utilization. In Bacillus cereus (strain AH820), this protein is Hut operon positive regulatory protein.